The following is a 264-amino-acid chain: 5'-nucleotidase SurE (264 aa).

D10, D11, S43, and N99 together coordinate a divalent metal cation.

This sequence belongs to the SurE nucleotidase family. It depends on a divalent metal cation as a cofactor.

Its subcellular location is the cytoplasm. The catalysed reaction is a ribonucleoside 5'-phosphate + H2O = a ribonucleoside + phosphate. Functionally, nucleotidase that shows phosphatase activity on nucleoside 5'-monophosphates. This is 5'-nucleotidase SurE from Methanococcus maripaludis (strain C5 / ATCC BAA-1333).